Consider the following 182-residue polypeptide: Adenylate kinase (182 aa).

12–17 (GAGKGT) is an ATP binding site. Residues 32–61 (STGDLLRAEVGAKTPLGQEAAAVMNRGELV) are NMP. AMP-binding positions include T33, R38, 59–61 (ELV), 85–88 (GFPR), and Q92. The interval 126–132 (SRGRSDD) is LID. R127 is a binding site for ATP. 2 residues coordinate AMP: R129 and R140. Residue G168 coordinates ATP.

It belongs to the adenylate kinase family. Monomer.

It localises to the cytoplasm. The catalysed reaction is AMP + ATP = 2 ADP. It participates in purine metabolism; AMP biosynthesis via salvage pathway; AMP from ADP: step 1/1. Catalyzes the reversible transfer of the terminal phosphate group between ATP and AMP. Plays an important role in cellular energy homeostasis and in adenine nucleotide metabolism. In Prochlorococcus marinus (strain MIT 9303), this protein is Adenylate kinase.